Consider the following 670-residue polypeptide: DNA ligase (670 aa).

Residues Asp35–Asp39, Ser84–Leu85, and Glu116 contribute to the NAD(+) site. The active-site N6-AMP-lysine intermediate is Lys118. 4 residues coordinate NAD(+): Arg139, Glu176, Lys293, and Lys317. Zn(2+)-binding residues include Cys411, Cys414, Cys429, and Cys435. Residues Val592–Ser670 enclose the BRCT domain.

It belongs to the NAD-dependent DNA ligase family. LigA subfamily. Requires Mg(2+) as cofactor. Mn(2+) is required as a cofactor.

The enzyme catalyses NAD(+) + (deoxyribonucleotide)n-3'-hydroxyl + 5'-phospho-(deoxyribonucleotide)m = (deoxyribonucleotide)n+m + AMP + beta-nicotinamide D-nucleotide.. Its function is as follows. DNA ligase that catalyzes the formation of phosphodiester linkages between 5'-phosphoryl and 3'-hydroxyl groups in double-stranded DNA using NAD as a coenzyme and as the energy source for the reaction. It is essential for DNA replication and repair of damaged DNA. This chain is DNA ligase, found in Coxiella burnetii (strain Dugway 5J108-111).